Reading from the N-terminus, the 468-residue chain is Ubiquitin carboxyl-terminal hydrolase MINDY-1 (468 aa).

The span at 1-19 shows a compositional bias: polar residues; the sequence is MEQPQTENPAPSKATSAET. The tract at residues 1–105 is disordered; it reads MEQPQTENPA…RPQELPQSPR (105 aa). Residues 22–41 are compositionally biased toward basic and acidic residues; sequence SENHEALSGPEKHPQDKDGA. Positions 43-54 are enriched in low complexity; that stretch reads ADGAAGEQEPGD. Over residues 68 to 80 the composition is skewed to pro residues; sequence CPPPEASSSPPGP. Serine 103 carries the phosphoserine modification. Cysteine 137 serves as the catalytic Nucleophile. Histidine 319 serves as the catalytic Proton acceptor. Positions 388–427 are ubiquitin-binding domain (UBD); that stretch reads QVDQDYLIALSLQQQQQPQGTLGLSDLELAQQLQQEEYQQ. Low complexity predominate over residues 423 to 432; it reads EEYQQQQAVQ. The tract at residues 423 to 468 is disordered; the sequence is EEYQQQQAVQPVRTRAPSPQGRGATSGRPAGERRQRSKTESDCVLL. The residue at position 440 (serine 440) is a Phosphoserine. Residues 452–468 show a composition bias toward basic and acidic residues; the sequence is AGERRQRSKTESDCVLL.

It belongs to the MINDY deubiquitinase family. FAM63 subfamily.

It catalyses the reaction Thiol-dependent hydrolysis of ester, thioester, amide, peptide and isopeptide bonds formed by the C-terminal Gly of ubiquitin (a 76-residue protein attached to proteins as an intracellular targeting signal).. Functionally, hydrolase that can specifically remove 'Lys-48'-linked conjugated ubiquitin from proteins. Has exodeubiquitinase activity and has a preference for long polyubiquitin chains. May play a regulatory role at the level of protein turnover. This chain is Ubiquitin carboxyl-terminal hydrolase MINDY-1 (Mindy1), found in Mus musculus (Mouse).